A 407-amino-acid polypeptide reads, in one-letter code: MTETTPKTAPWTVQKRTAVLVLADGTVIEGKGLGATGAVEAEVVFNTALTGYEEILTDPSYAGQIVTFTFPHIGNVGANAEDIEDLTPANRHGAVGAIFKADITAPSNFRAAKDLDSWLKHRGIIALAGIDTRALTALIRERGAQNAVIAHDPNGNFDLDALKARAANWCGLENLDLAKDVTIGQSLVWKELPWTLQDGYGEQDAPQYHVVALDFGVKRNILRLLTGLGAKVTVLPATATAEDVLAHNPDGVFLSNGPGDPAATGEYAVPTIGKLVETGIPLFGICLGHQMLALALGGRTEKMHQGHHGANHPVKDYTTGKVEIVSMNHGFAVDSDSLPENVEETHVSLFDGTNCGLRVVGKPVFSVQHHPEASPGPQDSHYLFRRFINLIRERKGQAPLPEREQAA.

The interval 1–205 (MTETTPKTAP…LQDGYGEQDA (205 aa)) is CPSase. The L-glutamine site is built by Ser-60, Gly-257, and Gly-259. The Glutamine amidotransferase type-1 domain maps to 209 to 397 (HVVALDFGVK…INLIRERKGQ (189 aa)). Cys-286 functions as the Nucleophile in the catalytic mechanism. Leu-287, Gln-290, Asn-328, Gly-330, and Phe-331 together coordinate L-glutamine. Catalysis depends on residues His-370 and Glu-372.

The protein belongs to the CarA family. In terms of assembly, composed of two chains; the small (or glutamine) chain promotes the hydrolysis of glutamine to ammonia, which is used by the large (or ammonia) chain to synthesize carbamoyl phosphate. Tetramer of heterodimers (alpha,beta)4.

It carries out the reaction hydrogencarbonate + L-glutamine + 2 ATP + H2O = carbamoyl phosphate + L-glutamate + 2 ADP + phosphate + 2 H(+). The enzyme catalyses L-glutamine + H2O = L-glutamate + NH4(+). It participates in amino-acid biosynthesis; L-arginine biosynthesis; carbamoyl phosphate from bicarbonate: step 1/1. Its pathway is pyrimidine metabolism; UMP biosynthesis via de novo pathway; (S)-dihydroorotate from bicarbonate: step 1/3. In terms of biological role, small subunit of the glutamine-dependent carbamoyl phosphate synthetase (CPSase). CPSase catalyzes the formation of carbamoyl phosphate from the ammonia moiety of glutamine, carbonate, and phosphate donated by ATP, constituting the first step of 2 biosynthetic pathways, one leading to arginine and/or urea and the other to pyrimidine nucleotides. The small subunit (glutamine amidotransferase) binds and cleaves glutamine to supply the large subunit with the substrate ammonia. This is Carbamoyl phosphate synthase small chain from Brucella abortus (strain S19).